Reading from the N-terminus, the 384-residue chain is Mitogen-activated protein kinase 8 (384 aa).

Residues 26-321 (YQNLKPIGSG…VDEALQHPYI (296 aa)) enclose the Protein kinase domain. Residues 32-40 (IGSGAQGIV) and Lys55 contribute to the ATP site. Cys116 bears the S-nitrosocysteine mark. Asp151 serves as the catalytic Proton acceptor. Thr183 carries the post-translational modification Phosphothreonine; by MAP2K7. The short motif at 183 to 185 (TPY) is the TXY element. Tyr185 bears the Phosphotyrosine; by MAP2K4 mark. Position 377 is a phosphoserine (Ser377).

It belongs to the protein kinase superfamily. CMGC Ser/Thr protein kinase family. MAP kinase subfamily. Binds to at least four scaffolding proteins, MAPK8IP1/JIP-1, MAPK8IP2/JIP-2, MAPK8IP3/JIP-3/JSAP1 and SPAG9/MAPK8IP4/JIP-4. These proteins also bind other components of the JNK signaling pathway. Forms a complex with MAPK8IP1 and ARHGEF28. Interacts with TP53 and WWOX. Interacts with JAMP. Interacts with NFATC4. Interacts with MECOM; regulates JNK signaling. Interacts with PIN1; this interaction mediates MAPK8 conformational changes leading to the binding of MAPK8 to its substrates. Interacts with HSF1 (via D domain and preferentially with hyperphosphorylated form); this interaction occurs under both normal growth conditions and immediately upon heat shock. Interacts (phosphorylated form) with NFE2; the interaction phosphorylates NFE2 in undifferentiated cells. Interacts with GRIPAP1. Interacts with POU5F1; phosphorylates POU5F1 at 'Ser-347'. Found in a complex with SH3RF1, RAC1, MAP3K11/MLK3, MAP2K7/MKK7 and MAPK8IP1/JIP1. Found in a complex with SH3RF1, RAC2, MAP3K7/TAK1, MAP2K7/MKK7, MAPK8IP1/JIP1 and MAPK9/JNK2. Mg(2+) is required as a cofactor. Phosphorylated by TAOK2. Dually phosphorylated on Thr-183 and Tyr-185 by MAP2K7 and MAP2K4, which activates the enzyme. May be phosphorylated at Thr-183 and Tyr-185 by MAP3K1/MEKK1. Phosphorylated form is more concentrated at synapses than none-phosphorylated. Brain (at protein level).

The protein localises to the cytoplasm. It localises to the nucleus. It is found in the synapse. The catalysed reaction is L-seryl-[protein] + ATP = O-phospho-L-seryl-[protein] + ADP + H(+). It carries out the reaction L-threonyl-[protein] + ATP = O-phospho-L-threonyl-[protein] + ADP + H(+). With respect to regulation, inhibited by SERPINB3. Activated by threonine and tyrosine phosphorylation by either of two dual specificity kinases, MAP2K4 and MAP2K7. MAP2K4 shows a strong preference for Tyr-185 while MAP2K7 phosphorylates Tyr-183 preferentially. Inhibited by dual specificity phosphatases, such as DUSP1. Its function is as follows. Serine/threonine-protein kinase involved in various processes such as cell proliferation, differentiation, migration, transformation and programmed cell death. Extracellular stimuli such as pro-inflammatory cytokines or physical stress stimulate the stress-activated protein kinase/c-Jun N-terminal kinase (SAP/JNK) signaling pathway. In this cascade, two dual specificity kinases MAP2K4/MKK4 and MAP2K7/MKK7 phosphorylate and activate MAPK8/JNK1. In turn, MAPK8/JNK1 phosphorylates a number of transcription factors, primarily components of AP-1 such as JUN, JDP2 and ATF2 and thus regulates AP-1 transcriptional activity. Phosphorylates the replication licensing factor CDT1, inhibiting the interaction between CDT1 and the histone H4 acetylase HBO1 to replication origins. Loss of this interaction abrogates the acetylation required for replication initiation. Promotes stressed cell apoptosis by phosphorylating key regulatory factors including p53/TP53 and Yes-associates protein YAP1. In T-cells, MAPK8 and MAPK9 are required for polarized differentiation of T-helper cells into Th1 cells. Contributes to the survival of erythroid cells by phosphorylating the antagonist of cell death BAD upon EPO stimulation. Mediates starvation-induced BCL2 phosphorylation, BCL2 dissociation from BECN1, and thus activation of autophagy. Phosphorylates STMN2 and hence regulates microtubule dynamics, controlling neurite elongation in cortical neurons. In the developing brain, through its cytoplasmic activity on STMN2, negatively regulates the rate of exit from multipolar stage and of radial migration from the ventricular zone. Phosphorylates several other substrates including heat shock factor protein 4 (HSF4), the deacetylase SIRT1, ELK1, or the E3 ligase ITCH. Phosphorylates the CLOCK-BMAL1 heterodimer and plays a role in the regulation of the circadian clock. Phosphorylates the heat shock transcription factor HSF1, suppressing HSF1-induced transcriptional activity. Phosphorylates POU5F1, which results in the inhibition of POU5F1's transcriptional activity and enhances its proteasomal degradation. Phosphorylates JUND and this phosphorylation is inhibited in the presence of MEN1. In neurons, phosphorylates SYT4 which captures neuronal dense core vesicles at synapses. Phosphorylates EIF4ENIF1/4-ET in response to oxidative stress, promoting P-body assembly. Phosphorylates SIRT6 in response to oxidative stress, stimulating its mono-ADP-ribosyltransferase activity. Phosphorylates NLRP3, promoting assembly of the NLRP3 inflammasome. Phosphorylates ALKBH5 in response to reactive oxygen species (ROS), promoting ALKBH5 sumoylation and inactivation. The sequence is that of Mitogen-activated protein kinase 8 (Mapk8) from Mus musculus (Mouse).